The sequence spans 201 residues: Probable molybdenum cofactor guanylyltransferase (201 aa).

GTP contacts are provided by residues 6–8 (LAG), lysine 18, aspartate 65, and aspartate 97. Aspartate 97 provides a ligand contact to Mg(2+).

The protein belongs to the MobA family. Requires Mg(2+) as cofactor.

Its subcellular location is the cytoplasm. The enzyme catalyses Mo-molybdopterin + GTP + H(+) = Mo-molybdopterin guanine dinucleotide + diphosphate. Functionally, transfers a GMP moiety from GTP to Mo-molybdopterin (Mo-MPT) cofactor (Moco or molybdenum cofactor) to form Mo-molybdopterin guanine dinucleotide (Mo-MGD) cofactor. This is Probable molybdenum cofactor guanylyltransferase from Staphylococcus haemolyticus (strain JCSC1435).